A 191-amino-acid polypeptide reads, in one-letter code: Ribosomal RNA large subunit methyltransferase E (191 aa).

S-adenosyl-L-methionine is bound by residues glycine 49, tryptophan 51, aspartate 66, aspartate 82, and aspartate 105. Lysine 145 functions as the Proton acceptor in the catalytic mechanism.

Belongs to the class I-like SAM-binding methyltransferase superfamily. RNA methyltransferase RlmE family.

It localises to the cytoplasm. It carries out the reaction uridine(2552) in 23S rRNA + S-adenosyl-L-methionine = 2'-O-methyluridine(2552) in 23S rRNA + S-adenosyl-L-homocysteine + H(+). Its function is as follows. Specifically methylates the uridine in position 2552 of 23S rRNA at the 2'-O position of the ribose in the fully assembled 50S ribosomal subunit. This chain is Ribosomal RNA large subunit methyltransferase E, found in Archaeoglobus fulgidus (strain ATCC 49558 / DSM 4304 / JCM 9628 / NBRC 100126 / VC-16).